The chain runs to 565 residues: uncharacterized protein (565 aa).

Positions 1 to 21 are cleaved as a signal peptide; that stretch reads MKIPSQQVLLALPLLASPAQS. Residues N46 and N88 are each glycosylated (N-linked (GlcNAc...) asparagine). The FAD-binding PCMH-type domain occupies 118-302; the sequence is QGIVPYYSVS…TSVTYKTHPK (185 aa). H155 is subject to Pros-8alpha-FAD histidine. N-linked (GlcNAc...) asparagine glycosylation is found at N191, N314, N364, N371, and N484.

The protein belongs to the oxygen-dependent FAD-linked oxidoreductase family. The cofactor is FAD.

The protein resides in the secreted. This is an uncharacterized protein from Arthroderma benhamiae (strain ATCC MYA-4681 / CBS 112371) (Trichophyton mentagrophytes).